The primary structure comprises 103 residues: Large ribosomal subunit protein bL21 (103 aa).

Belongs to the bacterial ribosomal protein bL21 family. As to quaternary structure, part of the 50S ribosomal subunit. Contacts protein L20.

In terms of biological role, this protein binds to 23S rRNA in the presence of protein L20. This is Large ribosomal subunit protein bL21 from Parvibaculum lavamentivorans (strain DS-1 / DSM 13023 / NCIMB 13966).